The primary structure comprises 610 residues: MKWVVSIFLIVLLNFTESRTMHENAYGIASILDSSQCSAEMNLVDLATIFFAQFVQEATYKEVNQMVKDVLTVIEKSTGSEQPAGCLENQVSVFLEEICHEEEIPEKYGLSHCCSQSGEERHNCFLARKKAAPASIPPFQVPEPVTSCKAYEENRELFMTRYIYEIARRHPFLYAPTILSLAAQYDKIIPPCCKAENAVECFQTKAASITKELRESSLLNQHMCTVMRQFGARTFRAITVTKLSQKFPKANFTEIQKLVLDVAHIHEECCRGNVLECLQDAERVVSYVCSQQDTLSSKIAECCKLPTTLELGQCIIHAENDDKPEGLSPNLNRFLGERDFNQLSSREKDLSMARFTYEYSRRHPKLAVPVILRVAKGYQELLEKCSQSENPLECQDKGEEELEKYIQESQALAKRSCGLFQKLGEYYLQNAFLVAYTKKAPQLTPPELMALTRKMATTGAACCHLSEDRQLACGEGAADLIIGQLCIRHEEMPINPGVGQCCTSSYANRRPCFSSLVLDETYVPPPFSDDKFIFHKDLCQAQGVALQTMKQQFLINLVKQKPQITEEQLEAVIADFSGLLEKCCQGQEQEVCFAEEGPALISKTRASLGV.

An N-terminal signal peptide occupies residues 1-18; sequence MKWVVSIFLIVLLNFTES. 3 Albumin domains span residues 19–210, 211–403, and 404–602; these read RTMH…ASIT, KELR…EELE, and KYIQ…ALIS. H22 is a binding site for Cu(2+). Intrachain disulfides connect C99/C114, C113/C124, C148/C193, C192/C201, C224/C270, C269/C277, C289/C303, and C302/C314. Residues S111, S115, and S117 each carry the phosphoserine modification. The N-linked (GlcNAc...) asparagine glycan is linked to N251. At S345 the chain carries Phosphoserine. Disulfide bonds link C385–C394, C417–C463, C462–C473, C486–C502, C501–C512, C539–C584, and C583–C592.

The protein belongs to the ALB/AFP/VDB family. In terms of assembly, dimeric and trimeric forms have been found in addition to the monomeric form. In terms of tissue distribution, plasma. Synthesized by the fetal liver and yolk sac.

The protein localises to the secreted. In terms of biological role, binds copper, nickel, and fatty acids as well as, and bilirubin less well than, serum albumin. This Sus scrofa (Pig) protein is Alpha-fetoprotein (AFP).